Here is a 405-residue protein sequence, read N- to C-terminus: Nicotinate phosphoribosyltransferase (405 aa).

At His230 the chain carries Phosphohistidine; by autocatalysis.

The protein belongs to the NAPRTase family. In terms of processing, transiently phosphorylated on a His residue during the reaction cycle. Phosphorylation strongly increases the affinity for substrates and increases the rate of nicotinate D-ribonucleotide production. Dephosphorylation regenerates the low-affinity form of the enzyme, leading to product release.

It catalyses the reaction nicotinate + 5-phospho-alpha-D-ribose 1-diphosphate + ATP + H2O = nicotinate beta-D-ribonucleotide + ADP + phosphate + diphosphate. Its pathway is cofactor biosynthesis; NAD(+) biosynthesis; nicotinate D-ribonucleotide from nicotinate: step 1/1. In terms of biological role, catalyzes the synthesis of beta-nicotinate D-ribonucleotide from nicotinate and 5-phospho-D-ribose 1-phosphate at the expense of ATP. The chain is Nicotinate phosphoribosyltransferase from Bordetella bronchiseptica (strain ATCC BAA-588 / NCTC 13252 / RB50) (Alcaligenes bronchisepticus).